The following is a 98-amino-acid chain: HssA/B-like protein 33 (98 aa).

Disordered regions lie at residues 1 to 29 (MTLF…SGTS) and 60 to 98 (AKSS…SCSC). The segment covering 60 to 72 (AKSSGGSCGGKGG) has biased composition (gly residues). The segment covering 73 to 88 (PHNHGHGNGHGPHGHG) has biased composition (basic residues). Positions 89 to 98 (GKGSGGSCSC) are enriched in gly residues.

Belongs to the hssA/B family.

The protein is HssA/B-like protein 33 (hssl33) of Dictyostelium discoideum (Social amoeba).